The chain runs to 92 residues: Small ribosomal subunit protein uS17 (92 aa).

The protein belongs to the universal ribosomal protein uS17 family. Part of the 30S ribosomal subunit.

Functionally, one of the primary rRNA binding proteins, it binds specifically to the 5'-end of 16S ribosomal RNA. The polypeptide is Small ribosomal subunit protein uS17 (Cupriavidus metallidurans (strain ATCC 43123 / DSM 2839 / NBRC 102507 / CH34) (Ralstonia metallidurans)).